Here is a 291-residue protein sequence, read N- to C-terminus: Pantothenate synthetase (291 aa).

30-37 is a binding site for ATP; it reads MGYLHVGH. The active-site Proton donor is the His37. Residue Gln61 participates in (R)-pantoate binding. Gln61 serves as a coordination point for beta-alanine. 147–150 provides a ligand contact to ATP; it reads GEKD. A (R)-pantoate-binding site is contributed by Gln153. Residues Val176 and 184–187 each bind ATP; that span reads CSSR.

Belongs to the pantothenate synthetase family. In terms of assembly, homodimer.

The protein resides in the cytoplasm. The enzyme catalyses (R)-pantoate + beta-alanine + ATP = (R)-pantothenate + AMP + diphosphate + H(+). It functions in the pathway cofactor biosynthesis; (R)-pantothenate biosynthesis; (R)-pantothenate from (R)-pantoate and beta-alanine: step 1/1. Its function is as follows. Catalyzes the condensation of pantoate with beta-alanine in an ATP-dependent reaction via a pantoyl-adenylate intermediate. In Sinorhizobium medicae (strain WSM419) (Ensifer medicae), this protein is Pantothenate synthetase.